Here is a 410-residue protein sequence, read N- to C-terminus: Probable peptidoglycan glycosyltransferase FtsW (410 aa).

The next 9 helical transmembrane spans lie at 39-59 (LDPLLIWSATGLLLIGLVMVY), 78-98 (YFLLRHAMFLAVGIGAGLAAF), 108-128 (FAPWLFLIGVMLLVVVLIPGV), 177-197 (GFLPMAAMILLVGFLLLGEPD), 198-218 (FGAFVVITAIAFGVLFLGGIN), 221-241 (VFALLALVAVIGFMLLIWLSP), 303-323 (IAEELGFAGVLTVIALFAILI), 342-362 (GLVAMGIGLWLGVQSFINMGV), and 374-394 (LPLMSFGGSGIVANCLALAIL).

Belongs to the SEDS family. FtsW subfamily.

It is found in the cell inner membrane. It catalyses the reaction [GlcNAc-(1-&gt;4)-Mur2Ac(oyl-L-Ala-gamma-D-Glu-L-Lys-D-Ala-D-Ala)](n)-di-trans,octa-cis-undecaprenyl diphosphate + beta-D-GlcNAc-(1-&gt;4)-Mur2Ac(oyl-L-Ala-gamma-D-Glu-L-Lys-D-Ala-D-Ala)-di-trans,octa-cis-undecaprenyl diphosphate = [GlcNAc-(1-&gt;4)-Mur2Ac(oyl-L-Ala-gamma-D-Glu-L-Lys-D-Ala-D-Ala)](n+1)-di-trans,octa-cis-undecaprenyl diphosphate + di-trans,octa-cis-undecaprenyl diphosphate + H(+). It functions in the pathway cell wall biogenesis; peptidoglycan biosynthesis. In terms of biological role, peptidoglycan polymerase that is essential for cell division. This is Probable peptidoglycan glycosyltransferase FtsW from Aromatoleum aromaticum (strain DSM 19018 / LMG 30748 / EbN1) (Azoarcus sp. (strain EbN1)).